The following is a 256-amino-acid chain: Methylesterase 9 (256 aa).

The Acyl-ester intermediate role is filled by Ser78. Catalysis depends on charge relay system residues Asp206 and His234.

Belongs to the AB hydrolase superfamily. Methylesterase family.

The enzyme catalyses methyl (indol-3-yl)acetate + H2O = (indol-3-yl)acetate + methanol + H(+). It catalyses the reaction methyl (-)-jasmonate + H2O = jasmonate + methanol + H(+). The catalysed reaction is methyl salicylate + H2O = salicylate + methanol + H(+). Its pathway is plant hormone biosynthesis. It participates in lipid metabolism; oxylipin biosynthesis. Esterase activity is down-regulated by salicylic acid (SA). Methylesterase shown to have carboxylesterase activity, methyl indole-3-acetic acid (MeIAA) esterase activity, methyl salicylate (MeSA) esterase activity and methyl jasmonate (MeJA) esterase activity in vitro. Required to convert methyl salicylate (MeSA) to salicylic acid (SA) as part of the signal transduction pathways that activate systemic acquired resistance in systemic tissue. MeSA is believed to be an inactive form that needs to be demethylated to exert a biological effect. The chain is Methylesterase 9 from Arabidopsis thaliana (Mouse-ear cress).